The chain runs to 513 residues: ATP synthase subunit alpha (513 aa).

ATP is bound at residue 169 to 176; that stretch reads GDRQTGKT.

This sequence belongs to the ATPase alpha/beta chains family. F-type ATPases have 2 components, CF(1) - the catalytic core - and CF(0) - the membrane proton channel. CF(1) has five subunits: alpha(3), beta(3), gamma(1), delta(1), epsilon(1). CF(0) has three main subunits: a(1), b(2) and c(9-12). The alpha and beta chains form an alternating ring which encloses part of the gamma chain. CF(1) is attached to CF(0) by a central stalk formed by the gamma and epsilon chains, while a peripheral stalk is formed by the delta and b chains.

The protein localises to the cell inner membrane. The catalysed reaction is ATP + H2O + 4 H(+)(in) = ADP + phosphate + 5 H(+)(out). Functionally, produces ATP from ADP in the presence of a proton gradient across the membrane. The alpha chain is a regulatory subunit. In Methylobacillus flagellatus (strain ATCC 51484 / DSM 6875 / VKM B-1610 / KT), this protein is ATP synthase subunit alpha.